The following is a 620-amino-acid chain: Guanylate cyclase soluble subunit beta-1 (620 aa).

H105 contacts heme. One can recognise a Guanylate cyclase domain in the interval 421–554 (TILFSGIVGF…NTVNLTSRTE (134 aa)).

It belongs to the adenylyl cyclase class-4/guanylyl cyclase family. As to quaternary structure, the active enzyme is formed by a heterodimer of an alpha and a beta subunit. Heterodimer with GUCY1A1. Can also form inactive homodimers in vitro. The cofactor is heme.

Its subcellular location is the cytoplasm. It carries out the reaction GTP = 3',5'-cyclic GMP + diphosphate. Its activity is regulated as follows. Activated by nitric oxide in the presence of magnesium or manganese ions. Mediates responses to nitric oxide (NO) by catalyzing the biosynthesis of the signaling molecule cGMP. This chain is Guanylate cyclase soluble subunit beta-1 (Gucy1b1), found in Mus musculus (Mouse).